The chain runs to 121 residues: MSVLGTCCCWCPNLYIAMMGFFRRRFTKTQVYDILSANDPNLTPDISMRAVDHYRQAARLTSICAQHPAVMGTRDICALEKRAATNIAAGNALMDQLNKWTMDRAENSTTNLVGIINDINS.

This is an uncharacterized protein from Ictaluridae (bullhead catfishes).